The chain runs to 812 residues: Ribonucleoside-diphosphate reductase large subunit (812 aa).

The ATP-cone domain occupies 12-103 (LYVIKRDGRQ…VSNLHKETKK (92 aa)). ATP-binding positions include 16-17 (KR), 22-28 (EEVHFDK), Thr-64, and Asp-68. Residues Ser-213 and Ser-228 each coordinate GDP. Cys-229 and Cys-455 are disulfide-bonded. Residues 237–239 (DSI), Lys-254, Arg-267, and 274–275 (CG) contribute to the dTTP site. Position 438 (Asn-438) interacts with GDP. Asn-438 functions as the Proton acceptor in the catalytic mechanism. Cys-440 functions as the Cysteine radical intermediate in the catalytic mechanism. Residues Glu-442 and 615 to 618 (TAST) contribute to the GDP site. Glu-442 functions as the Proton acceptor in the catalytic mechanism. Position 778 is a phosphothreonine (Thr-778). Ser-782 is modified (phosphoserine). Tyr-786 is modified (phosphotyrosine).

It belongs to the ribonucleoside diphosphate reductase large chain family. In terms of assembly, heterodimer of a large and a small subunit.

It carries out the reaction a 2'-deoxyribonucleoside 5'-diphosphate + [thioredoxin]-disulfide + H2O = a ribonucleoside 5'-diphosphate + [thioredoxin]-dithiol. With respect to regulation, under complex allosteric control mediated by deoxynucleoside triphosphates and ATP binding to separate specificity and activation sites on the M1 subunit. The type of nucleotide bound at the specificity site determines substrate preference. It seems probable that ATP makes the enzyme reduce CDP and UDP, dGTP favors ADP reduction and dTTP favors GDP reduction. Stimulated by ATP and inhibited by dATP binding to the activity site. Its function is as follows. Provides the precursors necessary for DNA synthesis. Catalyzes the biosynthesis of deoxyribonucleotides from the corresponding ribonucleotides. This Drosophila melanogaster (Fruit fly) protein is Ribonucleoside-diphosphate reductase large subunit (RnrL).